Reading from the N-terminus, the 256-residue chain is Transmembrane protein 187 (256 aa).

7 helical membrane-spanning segments follow: residues 8–28 (ALFH…TGIF), 51–71 (FLAM…GVYW), 94–112 (VFAG…RIGM), 119–139 (VLDQ…CLCL), 146–168 (WLFL…HPHG), 193–213 (NISS…FVVL), and 233–253 (FWSK…LTSL).

Its subcellular location is the membrane. In Bos taurus (Bovine), this protein is Transmembrane protein 187 (TMEM187).